A 2332-amino-acid chain; its full sequence is Phosphatidylinositol phosphatase PTPRQ (2332 aa).

A signal peptide spans 1 to 35 (MKKVPIKPEQPEKLRAFNISTHSFSLHWSLPSGHV). 18 Fibronectin type-III domains span residues 36 to 99 (ERYQ…TKPG), 100 to 195 (PPVF…TAES), 199 to 294 (KVVN…SSST), 350 to 438 (PPQN…PPDV), 441 to 539 (AVFD…SHPD), 514 to 606 (GLYE…SVRT), 610 to 705 (VPSS…TSED), 710 to 799 (SPQD…TSET), 804 to 894 (APEN…TEED), 899 to 988 (PPQD…TPEG), 993 to 1093 (PPKD…TDQD), 1098 to 1190 (FVGN…TEED), 1192 to 1282 (PETS…TDES), 1287 to 1380 (PPQN…TQES), 1384 to 1470 (VVQN…LPET), 1474 to 1578 (VPTN…TLPG), 1583 to 1681 (PPEN…TLES), and 1686 to 1787 (PPNN…IKAP). The Extracellular portion of the chain corresponds to 36 to 1947 (ERYQVDLVPD…GEGLSERTVE (1912 aa)). Residue Asn94 is glycosylated (N-linked (GlcNAc...) asparagine). N-linked (GlcNAc...) asparagine glycosylation is found at Asn202 and Asn394. N-linked (GlcNAc...) asparagine glycosylation is found at Asn944, Asn1038, Asn1080, and Asn1101. Residues Asn1290 and Asn1295 are each glycosylated (N-linked (GlcNAc...) asparagine). N-linked (GlcNAc...) asparagine glycosylation occurs at Asn1844. A helical transmembrane segment spans residues 1948–1968 (IILSVTLCILSIILLGTAIFA). Over 1969–2332 (FARIRQKQKE…VELEWEETTM (364 aa)) the chain is Cytoplasmic. Positions 2036-2292 (FQEEFSELPK…IFLHQCILDL (257 aa)) constitute a Tyrosine-protein phosphatase domain. The active-site Phosphocysteine intermediate is the Cys2233.

It belongs to the protein-tyrosine phosphatase family. Receptor class 2A subfamily. Interacts with TPRN. TPRN, CLIC5 and PTPQR form concentric rings at the base of stereocilia and may form a complex. In developing kidney, it localizes to the basal membrane of podocytes, beginning when podocyte progenitors can first be identified in the embryonic kidney (at protein level). Expressed in lung and kidney.

It localises to the cell projection. Its subcellular location is the stereocilium. The protein resides in the apical cell membrane. The protein localises to the basal cell membrane. It carries out the reaction a 1,2-diacyl-sn-glycero-3-phospho-(1D-myo-inositol-3,4,5-trisphosphate) + H2O = a 1,2-diacyl-sn-glycero-3-phospho-(1D-myo-inositol-4,5-bisphosphate) + phosphate. The catalysed reaction is a 1,2-diacyl-sn-glycero-3-phospho-(1D-myo-inositol-3,4,5-trisphosphate) + H2O = a 1,2-diacyl-sn-glycero-3-phospho-(1D-myo-inositol-3,4-bisphosphate) + phosphate. It catalyses the reaction a 1,2-diacyl-sn-glycero-3-phospho-(1D-myo-inositol-3,5-bisphosphate) + H2O = a 1,2-diacyl-sn-glycero-3-phospho-(1D-myo-inositol-5-phosphate) + phosphate. The enzyme catalyses a 1,2-diacyl-sn-glycero-3-phospho-(1D-myo-inositol-3,5-bisphosphate) + H2O = a 1,2-diacyl-sn-glycero-3-phospho-(1D-myo-inositol-3-phosphate) + phosphate. In terms of biological role, dephosphorylates phosphatidylinositol phosphates, such as phosphatidylinositol 3,4,5-trisphosphate (PIP3) and phosphatidylinositol 3,5-diphosphates, with preference for PIP3. Phosphate can be hydrolyzed from the D3 and D5 positions in the inositol ring. Has low tyrosine-protein phosphatase activity in vitro; however, the relevance of such activity in vivo is unclear. Plays an important role in adipogenesis of mesenchymal stem cells (MSCs). Regulates the phosphorylation state of AKT1 by regulating the levels of PIP3 in MSCs and preadipocyte cells. Required for hair bundle maturation, a process that enables hair cells to detect and transmit sound and balance signals effectively, therefore affecting auditory function. May act by regulating the level of phosphatidylinositol 4,5-bisphosphate (PIP2) level in the basal region of hair bundles. In Homo sapiens (Human), this protein is Phosphatidylinositol phosphatase PTPRQ (PTPRQ).